The primary structure comprises 456 residues: Anthranilate synthase component 1 (456 aa).

Residues S31 and 244–246 (SYM) each bind L-tryptophan. Residue 279-280 (GT) participates in chorismate binding. A Mg(2+)-binding site is contributed by E306. Chorismate is bound by residues Y394, R414, 428–430 (GAG), and G430. E443 is a binding site for Mg(2+).

It belongs to the anthranilate synthase component I family. As to quaternary structure, heterotetramer consisting of two non-identical subunits: a beta subunit (TrpG) and a large alpha subunit (TrpE). Requires Mg(2+) as cofactor.

It carries out the reaction chorismate + L-glutamine = anthranilate + pyruvate + L-glutamate + H(+). It participates in amino-acid biosynthesis; L-tryptophan biosynthesis; L-tryptophan from chorismate: step 1/5. Feedback inhibited by tryptophan. Its function is as follows. Part of a heterotetrameric complex that catalyzes the two-step biosynthesis of anthranilate, an intermediate in the biosynthesis of L-tryptophan. In the first step, the glutamine-binding beta subunit (TrpG) of anthranilate synthase (AS) provides the glutamine amidotransferase activity which generates ammonia as a substrate that, along with chorismate, is used in the second step, catalyzed by the large alpha subunit of AS (TrpE) to produce anthranilate. In the absence of TrpG, TrpE can synthesize anthranilate directly from chorismate and high concentrations of ammonia. The chain is Anthranilate synthase component 1 (trpE) from Lactococcus lactis subsp. lactis (strain IL1403) (Streptococcus lactis).